Here is a 207-residue protein sequence, read N- to C-terminus: Ribosome maturation factor RimP (207 aa).

Belongs to the RimP family.

It localises to the cytoplasm. Required for maturation of 30S ribosomal subunits. In Parvibaculum lavamentivorans (strain DS-1 / DSM 13023 / NCIMB 13966), this protein is Ribosome maturation factor RimP.